We begin with the raw amino-acid sequence, 432 residues long: Adenylosuccinate synthetase (432 aa).

GTP contacts are provided by residues 12–18 (GDEGKGK) and 40–42 (GHT). Asp13 acts as the Proton acceptor in catalysis. Mg(2+)-binding residues include Asp13 and Gly40. IMP is bound by residues 13–16 (DEGK), 38–41 (NAGH), Thr129, Arg143, Gln224, Thr239, and Arg303. His41 functions as the Proton donor in the catalytic mechanism. A substrate-binding site is contributed by 299–305 (VTTGRRR). Residues Arg305, 331 to 333 (KLD), and 413 to 415 (GVG) contribute to the GTP site.

The protein belongs to the adenylosuccinate synthetase family. Homodimer. Mg(2+) serves as cofactor.

The protein localises to the cytoplasm. The enzyme catalyses IMP + L-aspartate + GTP = N(6)-(1,2-dicarboxyethyl)-AMP + GDP + phosphate + 2 H(+). It participates in purine metabolism; AMP biosynthesis via de novo pathway; AMP from IMP: step 1/2. In terms of biological role, plays an important role in the de novo pathway of purine nucleotide biosynthesis. Catalyzes the first committed step in the biosynthesis of AMP from IMP. This chain is Adenylosuccinate synthetase, found in Mycolicibacterium paratuberculosis (strain ATCC BAA-968 / K-10) (Mycobacterium paratuberculosis).